We begin with the raw amino-acid sequence, 226 residues long: MERFLGFRTPLGALGVVILLTLILSSCSVKTSYKEKGRVYNGKCPEYAKVWVHYCPTKYAYTDRYQHLSKVKIVNPRNGKSVKISLRLNKKVRGICLPKRLKKYLGKPFLGKVYLLRCGENGVKKCPKYIRGYASWYGGKFHGRKTASGIRFNQHEYYAAHRYLPFGTLLEVKNLKNGRKVIVKVVDRGPYVRGRHLDLSYAAAKKLGMIRDGVIPFEAKVLRCGY.

A signal peptide spans methionine 1–serine 26. The N-palmitoyl cysteine moiety is linked to residue cysteine 27. A lipid anchor (S-diacylglycerol cysteine) is attached at cysteine 27.

This sequence belongs to the RlpA family.

The protein localises to the cell membrane. In terms of biological role, lytic transglycosylase with a strong preference for naked glycan strands that lack stem peptides. This Aquifex aeolicus (strain VF5) protein is Probable endolytic peptidoglycan transglycosylase RlpA.